A 364-amino-acid polypeptide reads, in one-letter code: Alanine racemase (364 aa).

Lys-34 acts as the Proton acceptor; specific for D-alanine in catalysis. Lys-34 is modified (N6-(pyridoxal phosphate)lysine). Arg-129 contributes to the substrate binding site. The Proton acceptor; specific for L-alanine role is filled by Tyr-259. Met-307 is a substrate binding site.

It belongs to the alanine racemase family. It depends on pyridoxal 5'-phosphate as a cofactor.

It catalyses the reaction L-alanine = D-alanine. It participates in amino-acid biosynthesis; D-alanine biosynthesis; D-alanine from L-alanine: step 1/1. Functionally, catalyzes the interconversion of L-alanine and D-alanine. May also act on other amino acids. In Coxiella burnetii (strain Dugway 5J108-111), this protein is Alanine racemase (alr).